The sequence spans 226 residues: UPF0758 protein SUB0843 (226 aa).

The MPN domain maps to 103–225 (QILSSYQVAK…YYSFREKSDI (123 aa)). The Zn(2+) site is built by histidine 174, histidine 176, and aspartate 187. Positions 174–187 (HNHPSGLTNPSEND) match the JAMM motif motif.

The protein belongs to the UPF0758 family.

This chain is UPF0758 protein SUB0843, found in Streptococcus uberis (strain ATCC BAA-854 / 0140J).